The primary structure comprises 354 residues: Guanine nucleotide-binding protein G(i) subunit alpha (354 aa).

A lipid anchor (N-myristoyl glycine) is attached at Gly2. A lipid anchor (S-palmitoyl cysteine) is attached at Cys3. The region spanning 32 to 354 (REVKLLLLGA…KNNLKDCGLF (323 aa)) is the G-alpha domain. Positions 35 to 48 (KLLLLGAGESGKST) are G1 motif. GTP-binding positions include 40-47 (GAGESGKS), 175-181 (LRTRVKT), 200-204 (DVGGQ), 269-272 (NKKD), and Ala326. Positions 47 and 181 each coordinate Mg(2+). Residues 173-181 (DVLRTRVKT) form a G2 motif region. Positions 196 to 205 (FKMFDVGGQR) are G3 motif. Residues 265–272 (ILFLNKKD) form a G4 motif region. A G5 motif region spans residues 324–329 (TCATDT).

It belongs to the G-alpha family. G(i/o/t/z) subfamily. As to quaternary structure, g proteins are composed of 3 units; alpha, beta and gamma. The alpha chain contains the guanine nucleotide binding site.

Functionally, guanine nucleotide-binding proteins (G proteins) are involved as modulators or transducers in various transmembrane signaling systems. The sequence is that of Guanine nucleotide-binding protein G(i) subunit alpha from Planorbella trivolvis (Marsh rams-horn).